We begin with the raw amino-acid sequence, 180 residues long: Inner membrane-spanning protein YciB (180 aa).

Helical transmembrane passes span 11 to 31 (ILFFVVYKLAGIREAAIALII), 52 to 72 (IIMGIAVVFFGTLTAYFNKVE), 76 to 96 (WKVTIVYALFALILLISQYGF), 121 to 141 (LAWAGFFILCMLINIYISQYC), and 149 to 169 (FKSFGIIAMTFIATLFTGIYV).

The protein belongs to the YciB family.

It localises to the cell inner membrane. Its function is as follows. Plays a role in cell envelope biogenesis, maintenance of cell envelope integrity and membrane homeostasis. The protein is Inner membrane-spanning protein YciB of Mannheimia succiniciproducens (strain KCTC 0769BP / MBEL55E).